The primary structure comprises 193 residues: Dual-action ribosomal maturation protein DarP (193 aa).

Belongs to the DarP family.

It is found in the cytoplasm. In terms of biological role, member of a network of 50S ribosomal subunit biogenesis factors which assembles along the 30S-50S interface, preventing incorrect 23S rRNA structures from forming. Promotes peptidyl transferase center (PTC) maturation. The polypeptide is Dual-action ribosomal maturation protein DarP (Vibrio cholerae serotype O1 (strain ATCC 39315 / El Tor Inaba N16961)).